Reading from the N-terminus, the 467-residue chain is ATP synthase subunit beta (467 aa).

156 to 163 (GGAGVGKT) provides a ligand contact to ATP.

It belongs to the ATPase alpha/beta chains family. In terms of assembly, F-type ATPases have 2 components, CF(1) - the catalytic core - and CF(0) - the membrane proton channel. CF(1) has five subunits: alpha(3), beta(3), gamma(1), delta(1), epsilon(1). CF(0) has three main subunits: a(1), b(2) and c(9-12). The alpha and beta chains form an alternating ring which encloses part of the gamma chain. CF(1) is attached to CF(0) by a central stalk formed by the gamma and epsilon chains, while a peripheral stalk is formed by the delta and b chains.

The protein localises to the cell inner membrane. The enzyme catalyses ATP + H2O + 4 H(+)(in) = ADP + phosphate + 5 H(+)(out). Produces ATP from ADP in the presence of a proton gradient across the membrane. The catalytic sites are hosted primarily by the beta subunits. This Ralstonia nicotianae (strain ATCC BAA-1114 / GMI1000) (Ralstonia solanacearum) protein is ATP synthase subunit beta.